A 100-amino-acid polypeptide reads, in one-letter code: Putative pterin-4-alpha-carbinolamine dehydratase (100 aa).

It belongs to the pterin-4-alpha-carbinolamine dehydratase family.

It catalyses the reaction (4aS,6R)-4a-hydroxy-L-erythro-5,6,7,8-tetrahydrobiopterin = (6R)-L-erythro-6,7-dihydrobiopterin + H2O. In Alteromonas mediterranea (strain DSM 17117 / CIP 110805 / LMG 28347 / Deep ecotype), this protein is Putative pterin-4-alpha-carbinolamine dehydratase.